Consider the following 215-residue polypeptide: Cytochrome b6 (215 aa).

A helical transmembrane segment spans residues 32-52 (IFYCFGGIVFTCFLVQVATGF). A heme c-binding site is contributed by cysteine 35. Heme b is bound by residues histidine 86 and histidine 100. 3 consecutive transmembrane segments (helical) span residues 90 to 110 (ASMM…TGGF), 116 to 136 (LTWV…VTGY), and 186 to 206 (AHTF…FLMI). Heme b contacts are provided by histidine 187 and histidine 202.

It belongs to the cytochrome b family. PetB subfamily. As to quaternary structure, the 4 large subunits of the cytochrome b6-f complex are cytochrome b6, subunit IV (17 kDa polypeptide, PetD), cytochrome f and the Rieske protein, while the 4 small subunits are PetG, PetL, PetM and PetN. The complex functions as a dimer. Heme b serves as cofactor. Requires heme c as cofactor.

The protein localises to the plastid. It is found in the chloroplast thylakoid membrane. Component of the cytochrome b6-f complex, which mediates electron transfer between photosystem II (PSII) and photosystem I (PSI), cyclic electron flow around PSI, and state transitions. This Skeletonema costatum (Marine centric diatom) protein is Cytochrome b6.